The chain runs to 339 residues: Ribosomal RNA small subunit methyltransferase C (339 aa).

This sequence belongs to the methyltransferase superfamily. RsmC family. Monomer.

The protein localises to the cytoplasm. It carries out the reaction guanosine(1207) in 16S rRNA + S-adenosyl-L-methionine = N(2)-methylguanosine(1207) in 16S rRNA + S-adenosyl-L-homocysteine + H(+). In terms of biological role, specifically methylates the guanine in position 1207 of 16S rRNA in the 30S particle. This Aliivibrio fischeri (strain MJ11) (Vibrio fischeri) protein is Ribosomal RNA small subunit methyltransferase C.